The chain runs to 157 residues: Stalk-specific protein B (157 aa).

An N-terminal signal peptide occupies residues 1 to 19 (MRSILILLSLLLTIAFASA).

It localises to the secreted. The sequence is that of Stalk-specific protein B (staB) from Dictyostelium discoideum (Social amoeba).